A 340-amino-acid chain; its full sequence is Mitochondrial import receptor subunit TOM40 homolog 2 (340 aa).

Residues Met1–Pro37 are disordered.

This sequence belongs to the Tom40 family. In terms of assembly, forms part of the preprotein translocase of the outer mitochondrial membrane (TOM complex). Interacts with mitochondrial targeting sequences. In terms of tissue distribution, only expressed in the male germline, detected in primary spermatocytes as well as post-meiotic stages. Not detected in stem cells and spermatogonia near the tip of the testis.

The protein resides in the mitochondrion outer membrane. Channel-forming protein essential for import of protein precursors into mitochondria. In Drosophila melanogaster (Fruit fly), this protein is Mitochondrial import receptor subunit TOM40 homolog 2.